A 273-amino-acid polypeptide reads, in one-letter code: Putative phosphoenolpyruvate synthase regulatory protein (273 aa).

153–160 (GVSRCGKT) contributes to the ADP binding site.

The protein belongs to the pyruvate, phosphate/water dikinase regulatory protein family. PSRP subfamily.

It carries out the reaction [pyruvate, water dikinase] + ADP = [pyruvate, water dikinase]-phosphate + AMP + H(+). It catalyses the reaction [pyruvate, water dikinase]-phosphate + phosphate + H(+) = [pyruvate, water dikinase] + diphosphate. Functionally, bifunctional serine/threonine kinase and phosphorylase involved in the regulation of the phosphoenolpyruvate synthase (PEPS) by catalyzing its phosphorylation/dephosphorylation. The sequence is that of Putative phosphoenolpyruvate synthase regulatory protein from Yersinia enterocolitica serotype O:8 / biotype 1B (strain NCTC 13174 / 8081).